Consider the following 303-residue polypeptide: ATP phosphoribosyltransferase (303 aa).

This sequence belongs to the ATP phosphoribosyltransferase family. Long subfamily. Requires Mg(2+) as cofactor.

The protein resides in the cytoplasm. It carries out the reaction 1-(5-phospho-beta-D-ribosyl)-ATP + diphosphate = 5-phospho-alpha-D-ribose 1-diphosphate + ATP. It functions in the pathway amino-acid biosynthesis; L-histidine biosynthesis; L-histidine from 5-phospho-alpha-D-ribose 1-diphosphate: step 1/9. Feedback inhibited by histidine. Catalyzes the condensation of ATP and 5-phosphoribose 1-diphosphate to form N'-(5'-phosphoribosyl)-ATP (PR-ATP). Has a crucial role in the pathway because the rate of histidine biosynthesis seems to be controlled primarily by regulation of HisG enzymatic activity. The polypeptide is ATP phosphoribosyltransferase (Haemophilus influenzae (strain 86-028NP)).